Here is a 107-residue protein sequence, read N- to C-terminus: uncharacterized protein (107 aa).

Over residues 88-97 (EEKKEKDKGK) the composition is skewed to basic and acidic residues. A disordered region spans residues 88–107 (EEKKEKDKGKKGLLSRLKFW). Positions 98–107 (KGLLSRLKFW) are enriched in basic residues.

This is an uncharacterized protein from Methanocaldococcus jannaschii (strain ATCC 43067 / DSM 2661 / JAL-1 / JCM 10045 / NBRC 100440) (Methanococcus jannaschii).